The sequence spans 326 residues: Putative ankyrin repeat protein L25 (326 aa).

ANK repeat units lie at residues 11–40 (RSEY…DLNV), 42–65 (KLFY…NIHV), 66–95 (DDEF…DIHV), 96–125 (NDDA…DIHA), 127–154 (NELV…DIHA), 155–184 (EDDE…NFRA), 185–214 (ENDY…DIHA), 216–244 (DEYA…DIHA), 246–274 (NDYG…NIHA), and 275–304 (KDDY…NIHA).

The sequence is that of Putative ankyrin repeat protein L25 from Acanthamoeba polyphaga mimivirus (APMV).